The chain runs to 93 residues: Parbolysin P3 (93 aa).

3 disulfide bridges follow: cysteine 16-cysteine 37, cysteine 22-cysteine 33, and cysteine 47-cysteine 60.

Belongs to the worm cytolysin family. In terms of tissue distribution, localized within the skin and proboscis and are most readily isolated from body mucus secretions.

Its subcellular location is the secreted. Functionally, cytolysin that shows hemolytic activity (on bovine erythrocytes, HC(50)=5.75 mg/ml). This hemolytic activity is completely inhibited by small unilamelar vesicles composed of PC/PG, PC/PI and PC/PS in 1:1 molar ratios (with at least 100 mg/ml concentration). The sequence is that of Parbolysin P3 from Parborlasia corrugatus (Antarctic nemertean worm).